Reading from the N-terminus, the 129-residue chain is Glycine cleavage system H protein (129 aa).

The 83-residue stretch at 24–106 folds into the Lipoyl-binding domain; sequence TYTVGITEHA…YAGGWIFKIK (83 aa). At K65 the chain carries N6-lipoyllysine.

The protein belongs to the GcvH family. As to quaternary structure, the glycine cleavage system is composed of four proteins: P, T, L and H. (R)-lipoate is required as a cofactor.

Its function is as follows. The glycine cleavage system catalyzes the degradation of glycine. The H protein shuttles the methylamine group of glycine from the P protein to the T protein. The protein is Glycine cleavage system H protein of Escherichia fergusonii (strain ATCC 35469 / DSM 13698 / CCUG 18766 / IAM 14443 / JCM 21226 / LMG 7866 / NBRC 102419 / NCTC 12128 / CDC 0568-73).